The sequence spans 210 residues: Small ribosomal subunit protein uS3 (210 aa).

Residues 38-106 (IRAWLKKRLA…EVQINIVEIR (69 aa)) enclose the KH type-2 domain.

This sequence belongs to the universal ribosomal protein uS3 family. Part of the 30S ribosomal subunit. Forms a tight complex with proteins S10 and S14.

Functionally, binds the lower part of the 30S subunit head. Binds mRNA in the 70S ribosome, positioning it for translation. In Magnetococcus marinus (strain ATCC BAA-1437 / JCM 17883 / MC-1), this protein is Small ribosomal subunit protein uS3.